The sequence spans 53 residues: Abaecin (53 aa).

A signal peptide spans 1-19 (MKVVIFIFALLATICAAFA).

The protein resides in the secreted. Its function is as follows. This peptide has bactericidal activity. This is Abaecin from Apis mellifera (Honeybee).